A 209-amino-acid polypeptide reads, in one-letter code: Ribosomal RNA large subunit methyltransferase E (209 aa).

The S-adenosyl-L-methionine site is built by G63, W65, D83, D99, and D124. Residue K164 is the Proton acceptor of the active site.

It belongs to the class I-like SAM-binding methyltransferase superfamily. RNA methyltransferase RlmE family.

Its subcellular location is the cytoplasm. It carries out the reaction uridine(2552) in 23S rRNA + S-adenosyl-L-methionine = 2'-O-methyluridine(2552) in 23S rRNA + S-adenosyl-L-homocysteine + H(+). Functionally, specifically methylates the uridine in position 2552 of 23S rRNA at the 2'-O position of the ribose in the fully assembled 50S ribosomal subunit. This Vibrio atlanticus (strain LGP32) (Vibrio splendidus (strain Mel32)) protein is Ribosomal RNA large subunit methyltransferase E.